The primary structure comprises 463 residues: Exodeoxyribonuclease 7 large subunit (463 aa).

It belongs to the XseA family. In terms of assembly, heterooligomer composed of large and small subunits.

It is found in the cytoplasm. It carries out the reaction Exonucleolytic cleavage in either 5'- to 3'- or 3'- to 5'-direction to yield nucleoside 5'-phosphates.. Bidirectionally degrades single-stranded DNA into large acid-insoluble oligonucleotides, which are then degraded further into small acid-soluble oligonucleotides. The chain is Exodeoxyribonuclease 7 large subunit from Pseudomonas syringae pv. syringae (strain B728a).